The following is a 366-amino-acid chain: Chorismate synthase (366 aa).

An NADP(+)-binding site is contributed by arginine 48. FMN-binding positions include 125-127, glycine 283, 298-302, and arginine 324; these read RSS and KPTPS.

This sequence belongs to the chorismate synthase family. In terms of assembly, homotetramer. It depends on FMNH2 as a cofactor.

It carries out the reaction 5-O-(1-carboxyvinyl)-3-phosphoshikimate = chorismate + phosphate. It functions in the pathway metabolic intermediate biosynthesis; chorismate biosynthesis; chorismate from D-erythrose 4-phosphate and phosphoenolpyruvate: step 7/7. In terms of biological role, catalyzes the anti-1,4-elimination of the C-3 phosphate and the C-6 proR hydrogen from 5-enolpyruvylshikimate-3-phosphate (EPSP) to yield chorismate, which is the branch point compound that serves as the starting substrate for the three terminal pathways of aromatic amino acid biosynthesis. This reaction introduces a second double bond into the aromatic ring system. This is Chorismate synthase from Lachnospira eligens (strain ATCC 27750 / DSM 3376 / VPI C15-48 / C15-B4) (Eubacterium eligens).